The sequence spans 613 residues: Xaa-Pro aminopeptidase ApepP (613 aa).

The substrate site is built by Arg-77 and His-388. Mn(2+)-binding residues include Asp-408, Asp-419, and His-482. His-482, His-491, and Glu-517 together coordinate substrate. The Mn(2+) site is built by Glu-517 and Glu-531.

The protein belongs to the peptidase M24B family. Mn(2+) is required as a cofactor. Detected in gut, brain, testes and ovary.

It is found in the cytoplasm. It carries out the reaction Release of any N-terminal amino acid, including proline, that is linked to proline, even from a dipeptide or tripeptide.. With respect to regulation, inhibited by the chelating agent EDTA. Divalent metal ions have substrate- and concentration-dependent effects on activity. Activity towards bradykinin is inhibited with increasing Mn(2+) concentration. Activity towards substance P is stimulated by low Mn(2+) concentrations (in the range 10 uM-1 mM) but inhibited by Mn(2+) concentrations in excess of 1 mM. Ca(2+), Mg(2+) and Co(2+) stimulate activity towards substance P at concentrations of 10-100 uM but are inhibitory at concentrations of 1 mM. Zn(2+), Ni(2+) and Cu(2+) strongly inhibit activity towards substance P at concentrations of 1 mM. Functionally, catalyzes the removal of a penultimate prolyl residue from the N-termini of peptides, such as Arg-Pro-Pro. In Drosophila melanogaster (Fruit fly), this protein is Xaa-Pro aminopeptidase ApepP.